The sequence spans 234 residues: Ribitol-5-phosphate cytidylyltransferase (234 aa).

Residues 7 to 10 (LAGG) and 79 to 85 (GSIVQKS) each bind CTP.

The protein belongs to the IspD/TarI cytidylyltransferase family. TarI subfamily.

The catalysed reaction is D-ribitol 5-phosphate + CTP + H(+) = CDP-L-ribitol + diphosphate. The protein operates within cell wall biogenesis; poly(ribitol phosphate) teichoic acid biosynthesis. Catalyzes the transfer of the cytidylyl group of CTP to D-ribitol 5-phosphate. The chain is Ribitol-5-phosphate cytidylyltransferase from Lacticaseibacillus paracasei (strain ATCC 334 / BCRC 17002 / CCUG 31169 / CIP 107868 / KCTC 3260 / NRRL B-441) (Lactobacillus paracasei).